A 198-amino-acid chain; its full sequence is NADH-quinone oxidoreductase subunit C (198 aa).

It belongs to the complex I 30 kDa subunit family. In terms of assembly, NDH-1 is composed of 14 different subunits. Subunits NuoB, C, D, E, F, and G constitute the peripheral sector of the complex.

It is found in the cell inner membrane. The enzyme catalyses a quinone + NADH + 5 H(+)(in) = a quinol + NAD(+) + 4 H(+)(out). Functionally, NDH-1 shuttles electrons from NADH, via FMN and iron-sulfur (Fe-S) centers, to quinones in the respiratory chain. The immediate electron acceptor for the enzyme in this species is believed to be ubiquinone. Couples the redox reaction to proton translocation (for every two electrons transferred, four hydrogen ions are translocated across the cytoplasmic membrane), and thus conserves the redox energy in a proton gradient. The protein is NADH-quinone oxidoreductase subunit C of Herminiimonas arsenicoxydans.